A 527-amino-acid chain; its full sequence is MMTNFPWLTTIILFPIVASLLLPIIPDKDGKTVRWYSLIVGLIDFAIIIAAFCTGYDVNNPELQLVESYPWVPQLDLNWSVGADGLSMPLIILTGFITTLAIMAAWPVSFKPKLFYFLMLAMYGGQIAVFAVQDMLLFFLVWELELVPVYLILSIWGGKRRLYAATKFILYTAGGSLFILIAALTMAFYGDTVSFDMRTIALKDYAFNLQLLLYAAFLIAYAVKLPIFPLHTWLPDAHGEATAPAHMLLAGILLKMGGYALLRMNAGMLPDAHAVFAPVLVILGVVNIVYAALTSFAQRNLKRKIAYSSISHMGFVLIGMASFTDIGLSGAVLQMISHGLIGASLFFLVGATYDRTHTLILDEMGGVGQKMKKVFAMWTTCSMASLALPGMSGFVAEVMVFIGFATSDAYSSTFKVLVIFLSAVGVILTPIYLLSMLREILYGPENKKLVEHEVLKDAEPREVFIIGCLLVPIIGIGLYPKIVTQIYDATTVQLTARLRDSVPVLMGPEKVALTDVSELPTRAPEIK.

14 consecutive transmembrane segments (helical) span residues phenylalanine 5 to isoleucine 25, tryptophan 35 to glycine 55, leucine 90 to phenylalanine 110, proline 112 to valine 132, leucine 136 to tryptophan 156, phenylalanine 168 to phenylalanine 188, leucine 211 to histidine 231, threonine 242 to leucine 262, alanine 274 to threonine 294, isoleucine 310 to glycine 330, alanine 331 to alanine 351, leucine 386 to threonine 406, valine 416 to methionine 436, and valine 463 to valine 483.

Belongs to the complex I subunit 4 family.

It localises to the cellular thylakoid membrane. The enzyme catalyses a plastoquinone + NADH + (n+1) H(+)(in) = a plastoquinol + NAD(+) + n H(+)(out). It catalyses the reaction a plastoquinone + NADPH + (n+1) H(+)(in) = a plastoquinol + NADP(+) + n H(+)(out). Functionally, NDH-1 shuttles electrons from NAD(P)H, via FMN and iron-sulfur (Fe-S) centers, to quinones in the respiratory chain. The immediate electron acceptor for the enzyme in this species is believed to be plastoquinone. Couples the redox reaction to proton translocation (for every two electrons transferred, four hydrogen ions are translocated across the cytoplasmic membrane), and thus conserves the redox energy in a proton gradient. The polypeptide is NAD(P)H-quinone oxidoreductase chain 4 1 (Trichodesmium erythraeum (strain IMS101)).